The chain runs to 494 residues: MKVLYVCTELFPFLKTGGLADVSAGLAPALQAVGCEVRLLLPAFPAIANQALSTRPIASLPAGPMPWGPAPVLPPASLTLATLPGLELPVYLVQAPALYDRPGNPYLGPDGKDWSDNAIRFAALGWAGATLGQGLDPHWRPDVIHCHDWHSGLTPTYVRAFAAAKQATPATVFTIHNLAYQGLFAAAEVTRLGLPKSWFDIDGFEFFGKVSFMKAALRYADRITTVSPTYAREISSEAQGCGLDGLLRERANSLSGILNGVDDLIWNPATDALLPAPYDEHKLQGKTLAKRALQTKFGLEPRANALVFGAVSRLTEQKGLHLLPQVLADMVQRGGQLALLGQGDVALERAFVDAAIRYPGQVGVRIGYDEVTAHAVIAGADVILVPSEFEPCGLTQLYGLRYGTLPLVRRVGGLADTVVDCTLENLDEGSATGFVFDELSPAGLLSAVRRAFVLFRRPDEWLAVQQRGMGLRFDWLASAQHYLAMYQTLRPGAK.

Position 15 (lysine 15) interacts with ADP-alpha-D-glucose.

The protein belongs to the glycosyltransferase 1 family. Bacterial/plant glycogen synthase subfamily.

It carries out the reaction [(1-&gt;4)-alpha-D-glucosyl](n) + ADP-alpha-D-glucose = [(1-&gt;4)-alpha-D-glucosyl](n+1) + ADP + H(+). Its pathway is glycan biosynthesis; glycogen biosynthesis. Its function is as follows. Synthesizes alpha-1,4-glucan chains using ADP-glucose. The protein is Glycogen synthase of Albidiferax ferrireducens (strain ATCC BAA-621 / DSM 15236 / T118) (Rhodoferax ferrireducens).